The following is a 591-amino-acid chain: Isocitrate dehydrogenase kinase/phosphatase (591 aa).

ATP-binding positions include 315 to 321 (APGVKGM) and K336. Residue D371 is part of the active site.

This sequence belongs to the AceK family.

Its subcellular location is the cytoplasm. It catalyses the reaction L-seryl-[isocitrate dehydrogenase] + ATP = O-phospho-L-seryl-[isocitrate dehydrogenase] + ADP + H(+). In terms of biological role, bifunctional enzyme which can phosphorylate or dephosphorylate isocitrate dehydrogenase (IDH) on a specific serine residue. This is a regulatory mechanism which enables bacteria to bypass the Krebs cycle via the glyoxylate shunt in response to the source of carbon. When bacteria are grown on glucose, IDH is fully active and unphosphorylated, but when grown on acetate or ethanol, the activity of IDH declines drastically concomitant with its phosphorylation. The polypeptide is Isocitrate dehydrogenase kinase/phosphatase (Pectobacterium atrosepticum (strain SCRI 1043 / ATCC BAA-672) (Erwinia carotovora subsp. atroseptica)).